A 264-amino-acid chain; its full sequence is Virulence plasmid ParA family protein pGP5-D (264 aa).

F9–T16 lines the ATP pocket.

The protein belongs to the ParA family.

In terms of biological role, required for growth within mammalian cells. This chain is Virulence plasmid ParA family protein pGP5-D, found in Chlamydia trachomatis.